A 350-amino-acid chain; its full sequence is 4-hydroxythreonine-4-phosphate dehydrogenase (350 aa).

Substrate is bound by residues His138 and Thr139. His173, His218, and His273 together coordinate a divalent metal cation. The substrate site is built by Lys281, Asn290, and Arg299.

The protein belongs to the PdxA family. As to quaternary structure, homodimer. The cofactor is Zn(2+). Mg(2+) is required as a cofactor. Requires Co(2+) as cofactor.

Its subcellular location is the cytoplasm. It carries out the reaction 4-(phosphooxy)-L-threonine + NAD(+) = 3-amino-2-oxopropyl phosphate + CO2 + NADH. Its pathway is cofactor biosynthesis; pyridoxine 5'-phosphate biosynthesis; pyridoxine 5'-phosphate from D-erythrose 4-phosphate: step 4/5. Its function is as follows. Catalyzes the NAD(P)-dependent oxidation of 4-(phosphooxy)-L-threonine (HTP) into 2-amino-3-oxo-4-(phosphooxy)butyric acid which spontaneously decarboxylates to form 3-amino-2-oxopropyl phosphate (AHAP). The polypeptide is 4-hydroxythreonine-4-phosphate dehydrogenase (Xanthobacter autotrophicus (strain ATCC BAA-1158 / Py2)).